Consider the following 476-residue polypeptide: Siroheme synthase (476 aa).

The segment at 1–204 (MDYFPVFLNI…GKDQAAQDYL (204 aa)) is precorrin-2 dehydrogenase /sirohydrochlorin ferrochelatase. NAD(+) is bound by residues 22–23 (SV) and 43–44 (PT). S129 carries the post-translational modification Phosphoserine. Positions 218-476 (GEVYLVGAGP…GNTPGYSKHP (259 aa)) are uroporphyrinogen-III C-methyltransferase. P227 contacts S-adenosyl-L-methionine. D250 functions as the Proton acceptor in the catalytic mechanism. Catalysis depends on K272, which acts as the Proton donor. Residues 303–305 (GGD), I308, 333–334 (TA), M385, and G414 each bind S-adenosyl-L-methionine.

In the N-terminal section; belongs to the precorrin-2 dehydrogenase / sirohydrochlorin ferrochelatase family. This sequence in the C-terminal section; belongs to the precorrin methyltransferase family.

It carries out the reaction uroporphyrinogen III + 2 S-adenosyl-L-methionine = precorrin-2 + 2 S-adenosyl-L-homocysteine + H(+). The enzyme catalyses precorrin-2 + NAD(+) = sirohydrochlorin + NADH + 2 H(+). It catalyses the reaction siroheme + 2 H(+) = sirohydrochlorin + Fe(2+). The protein operates within cofactor biosynthesis; adenosylcobalamin biosynthesis; precorrin-2 from uroporphyrinogen III: step 1/1. Its pathway is cofactor biosynthesis; adenosylcobalamin biosynthesis; sirohydrochlorin from precorrin-2: step 1/1. It participates in porphyrin-containing compound metabolism; siroheme biosynthesis; precorrin-2 from uroporphyrinogen III: step 1/1. It functions in the pathway porphyrin-containing compound metabolism; siroheme biosynthesis; siroheme from sirohydrochlorin: step 1/1. The protein operates within porphyrin-containing compound metabolism; siroheme biosynthesis; sirohydrochlorin from precorrin-2: step 1/1. Multifunctional enzyme that catalyzes the SAM-dependent methylations of uroporphyrinogen III at position C-2 and C-7 to form precorrin-2 via precorrin-1. Then it catalyzes the NAD-dependent ring dehydrogenation of precorrin-2 to yield sirohydrochlorin. Finally, it catalyzes the ferrochelation of sirohydrochlorin to yield siroheme. The chain is Siroheme synthase from Nitrosomonas eutropha (strain DSM 101675 / C91 / Nm57).